Here is a 275-residue protein sequence, read N- to C-terminus: NADPH-dependent 7-cyano-7-deazaguanine reductase (275 aa).

81–83 (IES) serves as a coordination point for substrate. 83-84 (SK) is a binding site for NADPH. Cys181 (thioimide intermediate) is an active-site residue. The Proton donor role is filled by Asp188. 220–221 (HE) provides a ligand contact to substrate. 249-250 (RG) is a binding site for NADPH.

Belongs to the GTP cyclohydrolase I family. QueF type 2 subfamily. In terms of assembly, homodimer.

It is found in the cytoplasm. It carries out the reaction 7-aminomethyl-7-carbaguanine + 2 NADP(+) = 7-cyano-7-deazaguanine + 2 NADPH + 3 H(+). It functions in the pathway tRNA modification; tRNA-queuosine biosynthesis. Its function is as follows. Catalyzes the NADPH-dependent reduction of 7-cyano-7-deazaguanine (preQ0) to 7-aminomethyl-7-deazaguanine (preQ1). The sequence is that of NADPH-dependent 7-cyano-7-deazaguanine reductase from Xylella fastidiosa (strain M12).